Here is a 314-residue protein sequence, read N- to C-terminus: DNA-directed RNA polymerase subunit alpha (314 aa).

The alpha N-terminal domain (alpha-NTD) stretch occupies residues 1–227 (MTKFEIECVE…ELLHPLKEIN (227 aa)). Positions 241–314 (KINQILIEEL…LPKEKTVKPN (74 aa)) are alpha C-terminal domain (alpha-CTD).

It belongs to the RNA polymerase alpha chain family. In terms of assembly, in plastids the minimal PEP RNA polymerase catalytic core is composed of four subunits: alpha, beta, beta', and beta''. When a (nuclear-encoded) sigma factor is associated with the core the holoenzyme is formed, which can initiate transcription.

The protein resides in the plastid. The protein localises to the chloroplast. The catalysed reaction is RNA(n) + a ribonucleoside 5'-triphosphate = RNA(n+1) + diphosphate. Its function is as follows. DNA-dependent RNA polymerase catalyzes the transcription of DNA into RNA using the four ribonucleoside triphosphates as substrates. This Rhodomonas salina (Cryptomonas salina) protein is DNA-directed RNA polymerase subunit alpha.